A 1663-amino-acid polypeptide reads, in one-letter code: Complement C3 (1663 aa).

A signal peptide spans 1–24 (MGPASGSQLLVLLLLLASSPLALG). Serine 40 is modified (phosphoserine). Cystine bridges form between cysteine 559–cysteine 816, cysteine 626–cysteine 661, cysteine 693–cysteine 720, cysteine 694–cysteine 727, cysteine 707–cysteine 728, cysteine 873–cysteine 1513, cysteine 1101–cysteine 1158, cysteine 1358–cysteine 1489, cysteine 1389–cysteine 1458, cysteine 1506–cysteine 1511, cysteine 1518–cysteine 1590, cysteine 1537–cysteine 1661, and cysteine 1637–cysteine 1646. Position 671 is a phosphoserine (serine 671). The Anaphylatoxin-like domain occupies 693–728 (CCEDGMRDIPMRYSCQRRARLITQGENCIKAFIDCC). An N-linked (GlcNAc...) asparagine glycan is attached at asparagine 939. Position 968 is a phosphoserine (serine 968). Positions 1010 to 1013 (CGEQ) form a cross-link, isoglutamyl cysteine thioester (Cys-Gln). Phosphoserine is present on serine 1321. One can recognise an NTR domain in the interval 1518-1661 (CFMQQSQEKI…FTESMVVYGC (144 aa)). Residue serine 1573 is modified to Phosphoserine. N-linked (GlcNAc...) asparagine glycosylation is present at asparagine 1617. An interaction with CFP/properdin region spans residues 1634 to 1659 (AEECQDQKYQKQCEELGAFTESMVVY).

In terms of assembly, in absence of complement activation, the C3 precursor is first processed by the removal of 4 Arg residues, forming two chains, beta and alpha, linked by a disulfide bond. As to quaternary structure, complement C3b is composed of complement C3b and complement C3 beta chains that are associated via disulfide bonds. Non-enzymatic component of the C5 convertase, also named C4bC2bC3b, composed of the serine protease complement C2b (C2), complement C3b, as well as complement C4b (C4). Non-enzymatic component of the C5 convertase of the alternative complement pathways composed of the serine protease complement CFB and complement C3b. Interacts with CFP; interaction takes place together with CFB in the alternative complement system and allows the complex to become active. Interacts with CR1 (via Sushi 8 and Sushi 9 domains). Interacts with CFH. Interacts with CFH. Interacts with CR2. In terms of assembly, during pregnancy, C3dg exists as a complex (probably a 2:2:2 heterohexamer) with AGT and the proform of PRG2. Interacts with CR2 (via the N-terminal Sushi domains 1 and 2). Post-translationally, C3 precursor is first processed by the removal of 4 Arg residues, forming two chains, beta and alpha, linked by a disulfide bond. During activation of the complement systems, the alpha chain is cleaved into C3a and C3b by the C3 convertase: C3b stays linked to the beta chain, while C3a is released in the plasma. The alpha chain is cleaved by the serine protease complement C2b component of the C3 convertase to generate C3a and C3b following activation by the classical, lectin and GZMK complement systems. The alpha chain is cleaved by CFB component of the C3 convertase to generate C3a and C3b following activation by the alternative complement system. C3a is further processed by carboxypeptidases to release the C-terminal arginine residue generating the acylation stimulating protein (ASP). Levels of ASP are increased in adipocytes in the postprandial period and by insulin and dietary chylomicrons. In terms of processing, complement C3b is rapidly split in two positions by factor I (CFI) and a cofactor (CFH) to form iC3b (inactivated C3b) and C3f which is released. CFI and CFH catalyze proteolytic degradation of already-deposited complement C3b. Then iC3b is slowly cleaved (possibly by CFI) to form C3c (beta chain + alpha' chain fragment 1 + alpha' chain fragment 2), C3dg and C3f. Other proteases produce other fragments such as C3d or C3g. Post-translationally, upon activation, the internal thioester bond reacts with carbohydrate antigens on the target surface to form amide or ester bonds, leading to covalent association with the surface of pathogens. Complement C3b interacts with complement C4b via a thioester linkage. In terms of processing, phosphorylated by FAM20C in the extracellular medium.

Its subcellular location is the secreted. It is found in the cell surface. Complement activation is inhibited by VSIG4. Its function is as follows. Precursor of non-enzymatic components of the classical, alternative, lectin and GZMK complement pathways, which consist in a cascade of proteins that leads to phagocytosis and breakdown of pathogens and signaling that strengthens the adaptive immune system. Non-enzymatic component of C5 convertase. Generated following cleavage by C3 convertase, it covalently attaches to the surface of pathogens, where it acts as an opsonin that marks the surface of antigens for removal. Complement C3b binds covalently via its reactive thioester, to cell surface carbohydrates or immune aggregates. Together with complement C4b, it then recruits the serine protease complement C2b to form the C5 convertase, which cleaves and activate C5, the next component of the complement pathways. In the alternative complement pathway, recruits the serine protease CFB to form the C5 convertase that cleaves and activates C5. Functionally, mediator of local inflammatory process released following cleavage by C3 convertase. Acts by binding to its receptor, C3AR1, activating G protein-coupled receptor signaling, promoting the phosphorylation, ARRB2-mediated internalization and endocytosis of C3AR1. C3a anaphylatoxin stimulates the activation of immune cells such as mast cells and basophilic leukocytes to release inflammation agents, such as cytokines, chemokines and histamine, which promote inflammation development. Also acts as potent chemoattractant for the migration of macrophages and neutrophils to the inflamed tissues, resulting in neutralization of the inflammatory triggers by multiple ways, such as phagocytosis and generation of reactive oxidants. In terms of biological role, adipogenic hormone that stimulates triglyceride synthesis and glucose transport in adipocytes, regulating fat storage and playing a role in postprandial triglyceride clearance. Appears to stimulate triglyceride synthesis via activation of the PLC, MAPK and AKT signaling pathways. Acts by binding to its receptor, C5AR2, activating G protein-coupled receptor signaling, promoting the phosphorylation, ARRB2-mediated internalization and endocytosis of C5AR2. Its function is as follows. Acts as a chemoattractant for neutrophils in chronic inflammation. This Mus musculus (Mouse) protein is Complement C3.